The chain runs to 276 residues: MQVLETISDLREYRKNVKESVGFVPTMGALHKGHQSLIERSLKENFHTITSVFVNPTQFGANEDFSAYPRPLEKDLALCEKLGVDVVFVPKISEMYPYKSEQRLKLYAPKFLSHSLEGAMRKGHFDGVAQVVLRLFHLVNPTRAYFGKKDAQQLLIIQHLVKDLLLDIEIVPCEIVRDSDHLALSSRNVYLNAVERKQALAIPKALENIQQAIDMGEKACEMLKKIGLEILKNLEVDYLEFCNHKLEPLKIIEPTNTLILVAARAGKTRLLDNLWV.

27–34 is an ATP binding site; it reads MGALHKGH. The Proton donor role is filled by His34. Gln58 provides a ligand contact to (R)-pantoate. Gln58 contributes to the beta-alanine binding site. Residue 147–150 participates in ATP binding; it reads GKKD. Gln153 contacts (R)-pantoate. ATP contacts are provided by residues Val176 and 184–187; that span reads LSSR.

It belongs to the pantothenate synthetase family. In terms of assembly, homodimer.

Its subcellular location is the cytoplasm. The catalysed reaction is (R)-pantoate + beta-alanine + ATP = (R)-pantothenate + AMP + diphosphate + H(+). It participates in cofactor biosynthesis; (R)-pantothenate biosynthesis; (R)-pantothenate from (R)-pantoate and beta-alanine: step 1/1. Its function is as follows. Catalyzes the condensation of pantoate with beta-alanine in an ATP-dependent reaction via a pantoyl-adenylate intermediate. The protein is Pantothenate synthetase of Helicobacter acinonychis (strain Sheeba).